A 352-amino-acid polypeptide reads, in one-letter code: Macrophage-capping protein (352 aa).

N-acetylmethionine is present on Met1. The Gelsolin-like 1 repeat unit spans residues 27–75 (EKLKPVPIARESHGIFFSGDSYLVLHNGPEEASHLHLWIGQQSSRDEQG). The Nuclear localization signal signature appears at 139–148 (RKLYQVKGKK). Gelsolin-like repeat units follow at residues 150–190 (IRAT…LERN) and 265–311 (MNLT…KERQ). Ser341 carries the post-translational modification Phosphoserine.

The protein belongs to the villin/gelsolin family. Interacts with NUP62. Interacts with NUTF2 and RAN; involved in CAPG nuclear import. Phosphorylated. Nuclear GCAP39 is more highly phosphorylated than cytoplasmic GCAP39. Present in a large variety of tissues and is particularly abundant in kidney and lung. Highly expressed in macrophages (at protein level).

It localises to the nucleus. Its subcellular location is the cytoplasm. It is found in the melanosome. The protein localises to the cell projection. The protein resides in the lamellipodium. It localises to the ruffle. In terms of biological role, calcium-sensitive protein which reversibly blocks the barbed ends of actin filaments but does not sever preformed actin filaments. May play an important role in macrophage function. May play a role in regulating cytoplasmic and/or nuclear structures through potential interactions with actin. May bind DNA. Uncapping occurs either when Ca(2+) falls or when the concentration of polyphosphoinositide rises, both at low and high Ca(2+). The chain is Macrophage-capping protein (Capg) from Mus musculus (Mouse).